Reading from the N-terminus, the 133-residue chain is Egg protein CP422 (133 aa).

A signal peptide spans 1-21 (MHECMIVFFIFAVVSIYYADA). Disulfide bonds link Cys-107–Cys-121, Cys-114–Cys-125, and Cys-120–Cys-130.

Its subcellular location is the secreted. The sequence is that of Egg protein CP422 (CP422) from Schistosoma japonicum (Blood fluke).